A 542-amino-acid polypeptide reads, in one-letter code: CTP synthase (542 aa).

The segment at 1-269 (MQTKYIFITG…DALICELLHL (269 aa)) is amidoligase domain. Residue Ser14 coordinates CTP. Ser14 lines the UTP pocket. ATP is bound by residues 15–20 (SLGKGL) and Asp72. Mg(2+) contacts are provided by Asp72 and Glu143. CTP is bound by residues 150-152 (DIE), 189-194 (KTKPSQ), and Lys225. UTP-binding positions include 189–194 (KTKPSQ) and Lys225. An ATP-binding site is contributed by 241-243 (KDV). The region spanning 301 to 538 (YVQHQDAYKS…IQAMIIYHKS (238 aa)) is the Glutamine amidotransferase type-1 domain. L-glutamine is bound at residue Gly358. The Nucleophile; for glutamine hydrolysis role is filled by Cys385. Residues 386-389 (LGMQ), Glu409, and Arg466 contribute to the L-glutamine site. Residues His511 and Glu513 contribute to the active site.

It belongs to the CTP synthase family. As to quaternary structure, homotetramer.

The catalysed reaction is UTP + L-glutamine + ATP + H2O = CTP + L-glutamate + ADP + phosphate + 2 H(+). It catalyses the reaction L-glutamine + H2O = L-glutamate + NH4(+). It carries out the reaction UTP + NH4(+) + ATP = CTP + ADP + phosphate + 2 H(+). It participates in pyrimidine metabolism; CTP biosynthesis via de novo pathway; CTP from UDP: step 2/2. Its activity is regulated as follows. Allosterically activated by GTP, when glutamine is the substrate; GTP has no effect on the reaction when ammonia is the substrate. The allosteric effector GTP functions by stabilizing the protein conformation that binds the tetrahedral intermediate(s) formed during glutamine hydrolysis. Inhibited by the product CTP, via allosteric rather than competitive inhibition. Its function is as follows. Catalyzes the ATP-dependent amination of UTP to CTP with either L-glutamine or ammonia as the source of nitrogen. Regulates intracellular CTP levels through interactions with the four ribonucleotide triphosphates. The sequence is that of CTP synthase from Protochlamydia amoebophila (strain UWE25).